Here is a 96-residue protein sequence, read N- to C-terminus: MEQAPEDQGPQREPYNEWALELLEELKNEAVRHFPRLWLHGLGQHIYNTYGDTWEGVEAIIRILQQLLFIHFRIGCQHSRIGITPRRRVRDGPGRS.

A homooligomerization region spans residues Met-1–Leu-42. Phosphoserine; by host is present on residues Ser-79 and Ser-96.

The protein belongs to the HIV-1 VPR protein family. As to quaternary structure, homooligomer, may form homodimer. Interacts with p6-gag region of the Pr55 Gag precursor protein through a (Leu-X-X)4 motif near the C-terminus of the P6gag protein. Interacts with host UNG. May interact with host RAD23A/HHR23A. Interacts with host VPRBP/DCAF1, leading to hijack the CUL4A-RBX1-DDB1-DCAF1/VPRBP complex, mediating ubiquitination of host proteins such as TERT and ZGPAT and arrest of the cell cycle in G2 phase. In terms of processing, phosphorylated on several residues by host. These phosphorylations regulate VPR activity for the nuclear import of the HIV-1 pre-integration complex.

The protein localises to the virion. It is found in the host nucleus. The protein resides in the host extracellular space. Its function is as follows. During virus replication, may deplete host UNG protein, and incude G2-M cell cycle arrest. Acts by targeting specific host proteins for degradation by the 26S proteasome, through association with the cellular CUL4A-DDB1 E3 ligase complex by direct interaction with host VPRPB/DCAF-1. Cell cycle arrest reportedly occurs within hours of infection and is not blocked by antiviral agents, suggesting that it is initiated by the VPR carried into the virion. Additionally, VPR induces apoptosis in a cell cycle dependent manner suggesting that these two effects are mechanistically linked. Detected in the serum and cerebrospinal fluid of AIDS patient, VPR may also induce cell death to bystander cells. During virus entry, plays a role in the transport of the viral pre-integration (PIC) complex to the host nucleus. This function is crucial for viral infection of non-dividing macrophages. May act directly at the nuclear pore complex, by binding nucleoporins phenylalanine-glycine (FG)-repeat regions. This Human immunodeficiency virus type 1 group M subtype G (isolate SE6165) (HIV-1) protein is Protein Vpr.